Here is a 466-residue protein sequence, read N- to C-terminus: MDSSLQHSTTKILSTQESREALSNRLTMISGAKPLAFSIERIMSRTPEPKCLPVASLLQSSAPKGDQKPGLHINSSSIPRMIPFVPVAYEHCAKIGISGAELRKSHVDSSPPFSCSDLLNCALTLKGDFPREALPLQQYKLVRPRVVNHSSFHAMGAAFCYFNRGDSEWHPPASINIHPMASYFLGSPLHQAPKCYVAAERNKLLAPSVEKFPSGVTFKDLSQAQFQHYMKEGPRSLSDKITFKTSAKFSSASPSSKPKVFTCEVCGKVFNAHYNLTRHMPVHTGARPFVCKICGKGFRQASTLCRHKIIHTQEKPHKCNQCGKAFNRSSTLNTHTRIHAGYKPFVCEFCGKGFHQKGNYKNHKLTHSGEKQFKCNICNKAFHQIYNLTFHMHTHNDKKPFTCPTCGKGFCRNFDLKKHVRKLHDNSGSSAGTRGLGATGHQELHLPNREQSHTIIQSPQLQKSVY.

Residues 34–49 (PLAFSIERIMSRTPEP) carry the Engrailed homology 1 repressor motif. 6 consecutive C2H2-type zinc fingers follow at residues 261–283 (FTCEVCGKVFNAHYNLTRHMPVH), 289–311 (FVCKICGKGFRQASTLCRHKIIH), 317–339 (HKCNQCGKAFNRSSTLNTHTRIH), 345–367 (FVCEFCGKGFHQKGNYKNHKLTH), 373–395 (FKCNICNKAFHQIYNLTFHMHTH), and 401–424 (FTCPTCGKGFCRNFDLKKHVRKLH). Residues 446-466 (LPNREQSHTIIQSPQLQKSVY) are disordered. A compositionally biased stretch (polar residues) spans 453-466 (HTIIQSPQLQKSVY).

Belongs to the krueppel C2H2-type zinc-finger protein family.

Its subcellular location is the nucleus. Its function is as follows. Transcription repressor. Involved in the development of the forebrain region. The sequence is that of Fez family zinc finger protein 1 (fezf1) from Xenopus laevis (African clawed frog).